The sequence spans 267 residues: Phosphate import ATP-binding protein PstB 2 (267 aa).

In terms of domain architecture, ABC transporter spans 21–262; sequence LTTKDLHVYY…AKCQSTSDYV (242 aa). Position 53–60 (53–60) interacts with ATP; the sequence is GPSGCGKS.

This sequence belongs to the ABC transporter superfamily. Phosphate importer (TC 3.A.1.7) family. As to quaternary structure, the complex is composed of two ATP-binding proteins (PstB), two transmembrane proteins (PstC and PstA) and a solute-binding protein (PstS).

Its subcellular location is the cell membrane. The catalysed reaction is phosphate(out) + ATP + H2O = ADP + 2 phosphate(in) + H(+). Part of the ABC transporter complex PstSACB involved in phosphate import. Responsible for energy coupling to the transport system. The chain is Phosphate import ATP-binding protein PstB 2 from Streptococcus agalactiae serotype Ia (strain ATCC 27591 / A909 / CDC SS700).